A 197-amino-acid chain; its full sequence is MRHRKKGKKIGRTASHRKRTLQSLSNALIENKSITTTVAKAKALRPFVEPLITRAKEDTQHNRREVFRHLQSNDAIDELFGEVSERVGDRPGGYTRIIKLGQRSGDGAELALIELVDYNDVPPADTGQGGSGGTRRGSGKGRRTSTEEEQADASSSGDSSDEESESVEEDEATAEEASADAEQGEAEEEEESEEDNT.

Residues 120 to 197 (DVPPADTGQG…EEEESEEDNT (78 aa)) form a disordered region. A compositionally biased stretch (gly residues) spans 127–136 (GQGGSGGTRR). Positions 159-197 (SSDEESESVEEDEATAEEASADAEQGEAEEEEESEEDNT) are enriched in acidic residues.

The protein belongs to the bacterial ribosomal protein bL17 family. In terms of assembly, part of the 50S ribosomal subunit. Contacts protein L32.

This Salinibacter ruber (strain DSM 13855 / M31) protein is Large ribosomal subunit protein bL17.